The primary structure comprises 248 residues: Granulin (248 aa).

The protein belongs to the polyhedrin family.

Component of the virus occlusion bodies, which are large proteinaceous structures, that protect the virus from the outside environment for extended periods until they are ingested by insect larvae. The polypeptide is Granulin (Xestia c-nigrum granulosis virus (XnGV)).